The sequence spans 237 residues: Proteasome subunit beta type-1 (237 aa).

Belongs to the peptidase T1B family. As to quaternary structure, the 26S proteasome consists of a 20S proteasome core and two 19S regulatory subunits. The 20S proteasome core is a barrel-shaped complex made of 28 subunits that are arranged in four stacked rings. The two outer rings are each formed by seven alpha subunits, and the two inner rings are formed by seven beta subunits. The proteolytic activity is exerted by three beta-subunits psmb5, psmb6 and psmb7.

The protein resides in the cytoplasm. It is found in the nucleus. Functionally, non-catalytic component of the 20S core proteasome complex involved in the proteolytic degradation of most intracellular proteins. This complex plays numerous essential roles within the cell by associating with different regulatory particles. Associated with two 19S regulatory particles, forms the 26S proteasome and thus participates in the ATP-dependent degradation of ubiquitinated proteins. The 26S proteasome plays a key role in the maintenance of protein homeostasis by removing misfolded or damaged proteins that could impair cellular functions, and by removing proteins whose functions are no longer required. Associated with the PA200 or PA28, the 20S proteasome mediates ubiquitin-independent protein degradation. This chain is Proteasome subunit beta type-1, found in Danio rerio (Zebrafish).